We begin with the raw amino-acid sequence, 498 residues long: Minor fimbrium subunit Mfa1 (498 aa).

The N-terminal stretch at 1 to 19 (MKLNKMFLVGALLSLGFAS) is a signal peptide. Residue C20 is the site of N-palmitoyl cysteine attachment. C20 carries S-diacylglycerol cysteine lipidation. A propeptide spanning residues 20–50 (CSKEGNGPAPDSSSTADTHMSVSMSLPQHNR) is cleaved from the precursor. Residues 436–476 (SGNPFVPTDPDPNNPDTPDNPDTPDPEDPDTPNPEEPLPVQ) form a disordered region.

This sequence belongs to the bacteroidetes fimbrillin superfamily. FimA/Mfa1 family. Structural component of the fimbrial stalk. Minor fimbriae are composed of a structural subunit, such as the 53 kDa fimbrillin, and the accessory subunits Mfa3, Mfa4 and Mfa5. Fimbrium assembly occurs by linear, head-to-tail oligomerization of fimbrial subunits. This is mediated via insertion of a C-terminal beta-strand from one subunit into a groove in the N-terminal domain of the following subunit.

Its subcellular location is the fimbrium. It is found in the cell outer membrane. In terms of biological role, structural subunit of the minor fimbriae. These filamentous pili are attached to the cell surface; they mediate biofilm formation, adhesion onto host cells and onto other bacteria that are part of the oral microbiome. They play an important role in invasion of periodontal tissues and are recognized as major virulence factors. Mfa1 orthologs from different strains have highly divergent sequences, and this correlates with pathogenicity. In Porphyromonas gingivalis (Bacteroides gingivalis), this protein is Minor fimbrium subunit Mfa1.